A 377-amino-acid chain; its full sequence is 23S rRNA (uracil(747)-C(5))-methyltransferase RlmC (377 aa).

Residues cysteine 3, cysteine 11, cysteine 14, and cysteine 87 each coordinate [4Fe-4S] cluster. Residues glutamine 212, phenylalanine 241, glutamate 262, and asparagine 307 each contribute to the S-adenosyl-L-methionine site. Cysteine 334 (nucleophile) is an active-site residue.

This sequence belongs to the class I-like SAM-binding methyltransferase superfamily. RNA M5U methyltransferase family. RlmC subfamily.

It carries out the reaction uridine(747) in 23S rRNA + S-adenosyl-L-methionine = 5-methyluridine(747) in 23S rRNA + S-adenosyl-L-homocysteine + H(+). Its function is as follows. Catalyzes the formation of 5-methyl-uridine at position 747 (m5U747) in 23S rRNA. This chain is 23S rRNA (uracil(747)-C(5))-methyltransferase RlmC, found in Photorhabdus laumondii subsp. laumondii (strain DSM 15139 / CIP 105565 / TT01) (Photorhabdus luminescens subsp. laumondii).